We begin with the raw amino-acid sequence, 99 residues long: RNA-binding protein Hfq (99 aa).

The Sm domain maps to 9-68 (DPYLNALRRERIPVSIYLVNGIKLQGQIESFDQFVILLKNTVNQMVYKHAISTVVPARSV). Positions 67 to 99 (SVSHHNNNAQQQYQQQAAQAASAQSNETSSQAE) are disordered. The span at 72–99 (NNNAQQQYQQQAAQAASAQSNETSSQAE) shows a compositional bias: low complexity.

Belongs to the Hfq family. As to quaternary structure, homohexamer.

Its function is as follows. RNA chaperone that binds small regulatory RNA (sRNAs) and mRNAs to facilitate mRNA translational regulation in response to envelope stress, environmental stress and changes in metabolite concentrations. Also binds with high specificity to tRNAs. The polypeptide is RNA-binding protein Hfq (Actinobacillus succinogenes (strain ATCC 55618 / DSM 22257 / CCUG 43843 / 130Z)).